Here is a 259-residue protein sequence, read N- to C-terminus: MTDLTAAARLALSLMDLTTLNDDDTDEKVTKLCHQAKSPEGNTAAICIYPRFIPLARKVLREQGTPEIRIATVTNFPHGNDDLDIALAETNAALAYGADEVDVVFPYRALMAGNEQIGFDIVKACKDACAKAGALLKVIIETGELKDPALIRKASEISIKAGADFIKTSTGKVPVNATLESAELMLQVIHDMGVGKEVGFKPAGGVRTAEEAAQYLALANRIMGDNWVDARHFRFGASSLLGNLLATLGHGEQKSSSGY.

The active-site Proton donor/acceptor is Asp102. Residue Lys167 is the Schiff-base intermediate with acetaldehyde of the active site. Lys201 serves as the catalytic Proton donor/acceptor.

Belongs to the DeoC/FbaB aldolase family. DeoC type 2 subfamily.

It is found in the cytoplasm. It catalyses the reaction 2-deoxy-D-ribose 5-phosphate = D-glyceraldehyde 3-phosphate + acetaldehyde. It participates in carbohydrate degradation; 2-deoxy-D-ribose 1-phosphate degradation; D-glyceraldehyde 3-phosphate and acetaldehyde from 2-deoxy-alpha-D-ribose 1-phosphate: step 2/2. Catalyzes a reversible aldol reaction between acetaldehyde and D-glyceraldehyde 3-phosphate to generate 2-deoxy-D-ribose 5-phosphate. This Proteus mirabilis (strain HI4320) protein is Deoxyribose-phosphate aldolase.